Consider the following 3476-residue polypeptide: MANRRVGRGCWEVSPTERRPPAGLRGPAAEEEASSPPVLSLSHFCRSPFLCFGDVLLGASRTLSLALDNPNEEVAEVKISHFPAADLGFSVSQRCFVLQPKEKIVISVNWTPLKEGRVREIMTFLVNDVLKHQAILLGNAEEQKKKKRSLWDTIKKKKISASTSHNRRVSNIQNVNKTFSVSQKVDRVRSPLQACENLAMNEGGPPTENNSLTLEENKIPISPISPAFNECHGATCLPLSVRRSTTYSSLHASENRELLNVHSANVSKVSFNEKAVTETSFNSVNVNGQSGENSKLSLTPNYSSTLNITQSQIHFLSPDSFVNNSHGANNELELVTCLSSDMFMKDNSKPVHLESTIAHEIYQKILSPDSFIKDNYGLNQDLESESVNPILSPNQFLKDNMAYVCTSQQTCKVPLSNENSQVPQSPEDWRKSEVSPRIPECQGSKSPKAIFEEIVEMKSNYYSFIKQNNPKFSAVQDISSHSHNKQPKRRPILSATVTKRKATCTRENQTEINKPKAKRCLNSAVGEHEKVINNQKEKDFHSYLPIIDPILSKSKSYKNEVAPSSTTASVARKRKSDGSMEDANVRVAVTEHTEVREIKRIHFSPSEPKTSAVKKTKNVITPISKHISNREKLNLKKKTDLSIFRTPISKTNKRTKPIIAVAQSNLTFIKPLKTDIPRHPMPFAAKNMFYDERWKEKQEQGFTWWLNFILTPDDFTVKTNISEVNAATLLLGIENQHKISVPRAPTKEEMSLRAYTARCRLNRLRRAACRLFTSEKMVKAIKKLEIEIEARRLIVRKDRHLWKDVGERQKVLNWLLSYNPLWLRIGLETTYGELISLEDNSDVTGLAMFILNRLLWNPDIAAEYRHPTVPHLYRDGHEEALSKFTLKKLLLLVCFLDYAKISRLIDHDPCLFCKDAEFKASKEILLAFSRDFLSGEGDLSRHLGLLGLPVNHVQTPFDEFDFAVTNLAVDLQCGVRLVRTMELLTQNWDLSKKLRIPAISRLQKMHNVDVVLQVLKSRGIELSDEHGNTILSKDIVDRHREKTLRLLWKIAFAFQVDISLNLDQLKEEIAFLKHTKSIKKTISLLSCHSDDLINKKKGKRDSGSFEQYSENIKLLMDWVNAVCAFYNKKVENFTVSFSDGRVLCYLIHHYHPCYVPFDAICQRTTQTVECTQTGSVVLNSSSESDDSSLDMSLKAFDHENTSELYKELLENEKKNFHLVRSAVRDLGGIPAMINHSDMSNTIPDEKVVITYLSFLCARLLDLRKEIRAARLIQTTWRKYKLKTDLKRHQEREKAARIIQLAVINFLAKQRLRKRVNAALVIQKYWRRVLAQRKLLMLKKEKLEKVQNKAASLIQGYWRRYSTRRRFLKLKYYSIILQSRIRMIIAVTSYKRYLWATVTIQRHWRAYLRRKQDQQRYEMLKSSTLVIQSMFRKWKQRKMQSQVKATVILQRAFREWHLRKHAKEENSAIIIQSWYRMHKELQKYIYIRSCVVIIQKRFRCFQAQKLYKRKKESILTIQKYYKAYLKGKIERTNYLQKRAAAIQLQAAFRRLKAHNLCRQIRAACVIQSYWRMRQDRVRFLNLKKTIIKLQAHVRKHQQRQKYKKMKKAAVIIQTHFRAYIFARKVLASYQKTRSAVIVLQSAYRGMQARKMYVHILTSVIKIQSYYRAHVSKKEFLSLKNATIKLQSIVKMKQTRKQYLHLRAAALFIQQCYRSKKIAAQKREEYMQMRESCIKLQAFVRGYLVRKQMRLQRKAVISLQSYFRMRKARQYYLKMYKAIIVIQNYYHAYKAQVNQRKNFLQVKKAATCLQAAYRGYKVRQLIKQQSIAALKIQSAFRGYNKRVKYQSVLQSIIKIQRWYRAYKTLHDTRTHFLKTKAALISLQSAYRGWKVRKQIRREHQAVLKIQSAFRMAKAQKQFRLFKTAALVIQQNFKAWTAGRKQRMEYIELRHAVLMLQSMWRGKTLRRQLQRQHKCAVIIQSYYRMHVQQKKWKIMKKAALLIQKYYRAYSIGREQNHLYLKTKAAVVTLQSAYRGMKVRKRIKDCNKAAVTIQSKYRAYKTKKKYATYRASAIIIQRWYRGIKITNHQHKEYLNLKKTAIKIQSVYRGIRVRRHIQHMHRAATFIKAVFKMHQSRISYHTMRKAAIVIQVRFRAYYQGKTQREKYLTILKAVKILQASFRGVRVRRTLRKMQIAATLIQSNYRRYRKQTYFNKLKKITKTVQQRYRAMKERNIQFQRYNKLRHSVIYIQAIFRGKKARRHLKMMHIAATLIQRRFRTLMMRRRFLSLKKTAILIQRKYRAHLCTKHHLQFLQVQNAVIKIQSSYRRWMIRKRMREMHRAATFIQATFRMHRLHMRYQTLKQASVVIQQQYQANRAAKLQRQHYLRQRHSAVILQAAFRGMKTRRHLKSMHSSATLIQSRFRSLLVRRRFISLKKATIFVQRKYRATICAKHKLHQFLHLRKAAITIQSSYRRLMVKKKLQEMQRAAILIQATFRMHRTYTTFQTWKHASILIQQHYRTYRAAKLQRENYIRQWHSAVVIQAAYKGMKARHLLREKHKASIIIQSTYRMYRQYCFYQKLQWATKIIQEKYRANKKKQKAFQHNELKKETCVQAGFQDMNIKKQIQEQHQAAIIIQKHCKAFKIRKHYLHLRATVVSIQRRYRKLTAVRTQAVICIQSYYRGFKVRKDIQNMHQAATLIQSFYRMHRAKVDYETKKTAIVVIQNYYRLYVRVKTERKNFLAVQKSVRTIQAAFRGMEVRQKLKNVSEEKVAAIVNQSALCCYRSKTQYEAVQSEGVMIQEWYKASGLACSQEAEYHSQSRAAVTIQKAFCRMATRKLETQKYAALRIQFFLQMAVYRRRFVQQKRAAITLQHYFRTWQTRKQFLLYRKAAVVLQNHYRAFLSAKHQRQVYLQIRSSVIIIQARSKGFIQKRKFQEIKNSTIKIQAMWRRYRAKKYLCKVKAACKIQAWYRCWRAHKEYLAILKAVKIIQGCFYTKLERTRFLNVRASAIIIQRKWRAILSAKIAHEHFLMIKRHRAACLIQAHYRGYKGRQVFLRQKSAALIIQKYIRAREAGKRERIKYIEFKKSTVILQALVRGWLVRKRILEQRAKIRLLHFTAAAYYHLNALRIQRAYKLYLAMKHANKQVNSVICIQRWFRARLQEKRFIQKYHSVKKIEHEGQECLSQRNRAASVIQKAVRHFLLRKKQEKFTSGIIKIQALWRGYSWRKKNDCTKIKAIRLSLQVVNREIREENKLYKRTALALHYLLTYKHLSAILEALKHLEVVTRLSPLCCENMAHSGAISKIFVLIRSCNRSVPCMEVIRYAVQVLLNVSKYEKTTSAVYDVENCIDILLELLQIYREKPGNKVADKGGSIFTKTCCLLAILLKTTNRASDVRSRSKVVDRIYSLYKLTAHKHKMNTERILYKQKKNSSISIPFIPETPVRTRIVSRLKPDWVLRRDNMEEITNPLQAIQMVMDTLGIPY.

The disordered stretch occupies residues 1 to 30 (MANRRVGRGCWEVSPTERRPPAGLRGPAAE). Phosphoserine occurs at positions 280, 283, 367, 392, and 425. Disordered regions lie at residues 416-443 (SNENSQVPQSPEDWRKSEVSPRIPECQG) and 562-581 (APSSTTASVARKRKSDGSME). Phosphoserine is present on Ser-604. One can recognise a Calponin-homology (CH) 1 domain in the interval 919-1055 (KASKEILLAF…LLWKIAFAFQ (137 aa)). Positions 1056-1077 (VDISLNLDQLKEEIAFLKHTKS) form a coiled coil. The residue at position 1102 (Ser-1102) is a Phosphoserine. Positions 1109-1260 (SENIKLLMDW…YLSFLCARLL (152 aa)) constitute a Calponin-homology (CH) 2 domain. IQ domains are found at residues 1346 to 1377 (QNKAASLIQGYWRRYSTRRRFLKLKYYSIILQ), 1392 to 1421 (YLWATVTIQRHWRAYLRRKQDQQRYEMLKS), 1581 to 1612 (LKKTIIKLQAHVRKHQQRQKYKKMKKAAVIIQ), 1604 to 1633 (MKKAAVIIQTHFRAYIFARKVLASYQKTRS), 1631 to 1660 (TRSAVIVLQSAYRGMQARKMYVHILTSVIK), 1654 to 1683 (ILTSVIKIQSYYRAHVSKKEFLSLKNATIK), 1727 to 1756 (MRESCIKLQAFVRGYLVRKQMRLQRKAVIS), 1750 to 1781 (QRKAVISLQSYFRMRKARQYYLKMYKAIIVIQ), 1800 to 1829 (VKKAATCLQAAYRGYKVRQLIKQQSIAALK), 1823 to 1852 (QSIAALKIQSAFRGYNKRVKYQSVLQSIIK), 1873 to 1902 (TKAALISLQSAYRGWKVRKQIRREHQAVLK), 1896 to 1927 (EHQAVLKIQSAFRMAKAQKQFRLFKTAALVIQ), 1946 to 1977 (LRHAVLMLQSMWRGKTLRRQLQRQHKCAVIIQ), 1969 to 2000 (QHKCAVIIQSYYRMHVQQKKWKIMKKAALLIQ), 2019 to 2048 (TKAAVVTLQSAYRGMKVRKRIKDCNKAAVT), 2042 to 2073 (CNKAAVTIQSKYRAYKTKKKYATYRASAIIIQ), 2092 to 2123 (LKKTAIKIQSVYRGIRVRRHIQHMHRAATFIK), 2115 to 2146 (MHRAATFIKAVFKMHQSRISYHTMRKAAIVIQ), 2165 to 2196 (ILKAVKILQASFRGVRVRRTLRKMQIAATLIQ), 2238 to 2269 (LRHSVIYIQAIFRGKKARRHLKMMHIAATLIQ), 2261 to 2292 (MHIAATLIQRRFRTLMMRRRFLSLKKTAILIQ), 2310 to 2341 (VQNAVIKIQSSYRRWMIRKRMREMHRAATFIQ), 2333 to 2364 (MHRAATFIQATFRMHRLHMRYQTLKQASVVIQ), 2383 to 2414 (QRHSAVILQAAFRGMKTRRHLKSMHSSATLIQ), 2406 to 2437 (MHSSATLIQSRFRSLLVRRRFISLKKATIFVQ), 2456 to 2487 (LRKAAITIQSSYRRLMVKKKLQEMQRAAILIQ), 2479 to 2510 (MQRAAILIQATFRMHRTYTTFQTWKHASILIQ), 2529 to 2560 (QWHSAVVIQAAYKGMKARHLLREKHKASIIIQ), 2623 to 2652 (QHQAAIIIQKHCKAFKIRKHYLHLRATVVS), 2664 to 2695 (RTQAVICIQSYYRGFKVRKDIQNMHQAATLIQ), 2687 to 2718 (MHQAATLIQSFYRMHRAKVDYETKKTAIVVIQ), 2737 to 2766 (VQKSVRTIQAAFRGMEVRQKLKNVSEEKVA), 2858 to 2889 (QKRAAITLQHYFRTWQTRKQFLLYRKAAVVLQ), 2908 to 2937 (IRSSVIIIQARSKGFIQKRKFQEIKNSTIK), 2931 to 2962 (IKNSTIKIQAMWRRYRAKKYLCKVKAACKIQA), 2953 to 2984 (KVKAACKIQAWYRCWRAHKEYLAILKAVKIIQ), 3028 to 3059 (RHRAACLIQAHYRGYKGRQVFLRQKSAALIIQ), 3078 to 3109 (FKKSTVILQALVRGWLVRKRILEQRAKIRLLH), 3180 to 3209 (RNRAASVIQKAVRHFLLRKKQEKFTSGIIK), and 3203 to 3234 (FTSGIIKIQALWRGYSWRKKNDCTKIKAIRLS).

It localises to the cytoplasm. It is found in the cytoskeleton. The protein localises to the spindle. Its subcellular location is the nucleus. Its function is as follows. Probable role in mitotic spindle regulation and coordination of mitotic processes. May have a preferential role in regulating neurogenesis. The sequence is that of Abnormal spindle-like microcephaly-associated protein homolog (ASPM) from Gorilla gorilla gorilla (Western lowland gorilla).